Consider the following 1034-residue polypeptide: Presequence protease, mitochondrial (1034 aa).

A mitochondrion-targeting transit peptide spans 1 to 29; the sequence is MLKGGMLSRWKMWSPQYKILRNHLINFKS. Zn(2+) is bound at residue His128. Residue Glu131 is the Proton acceptor of the active site. His132 and Glu229 together coordinate Zn(2+).

The protein belongs to the peptidase M16 family. PreP subfamily. As to quaternary structure, homodimer. Zn(2+) serves as cofactor.

The protein resides in the mitochondrion. In terms of biological role, ATP-independent protease that degrades mitochondrial transit peptides after their cleavage. Also degrades other unstructured peptides. In Drosophila melanogaster (Fruit fly), this protein is Presequence protease, mitochondrial.